Here is a 309-residue protein sequence, read N- to C-terminus: Thermolabile glutaminase (309 aa).

Residues serine 64, asparagine 114, glutamate 160, asparagine 167, tyrosine 191, tyrosine 243, and valine 261 each coordinate substrate.

This sequence belongs to the glutaminase family. As to quaternary structure, homotetramer.

It catalyses the reaction L-glutamine + H2O = L-glutamate + NH4(+). This chain is Thermolabile glutaminase (glsA), found in Rhizobium etli (strain ATCC 51251 / DSM 11541 / JCM 21823 / NBRC 15573 / CFN 42).